The primary structure comprises 151 residues: Large ribosomal subunit protein uL15 (151 aa).

Positions Met1–Leu58 are disordered. The span at Pro10–Gly21 shows a compositional bias: basic residues. The segment covering Arg22–Gln36 has biased composition (gly residues).

Belongs to the universal ribosomal protein uL15 family. As to quaternary structure, part of the 50S ribosomal subunit.

Its function is as follows. Binds to the 23S rRNA. The sequence is that of Large ribosomal subunit protein uL15 from Mycoplasma pneumoniae (strain ATCC 29342 / M129 / Subtype 1) (Mycoplasmoides pneumoniae).